A 109-amino-acid polypeptide reads, in one-letter code: Guanylin (109 aa).

A signal peptide spans 1–21; sequence MNTFLFPTLCLLGVWAALAGG. Positions 22–94 are excised as a propeptide; it reads VTVKDGEFSF…LERLETIAQD (73 aa). 3 disulfides stabilise this stretch: C63–C76, C98–C106, and C101–C109.

This sequence belongs to the guanylin family.

The protein localises to the secreted. Endogenous activator of intestinal guanylate cyclase. It stimulates this enzyme through the same receptor binding region as the heat-stable enterotoxins. The sequence is that of Guanylin (GUCA2A) from Sus scrofa (Pig).